A 352-amino-acid polypeptide reads, in one-letter code: Phosphoribosylformylglycinamidine cyclo-ligase (352 aa).

It belongs to the AIR synthase family.

Its subcellular location is the cytoplasm. It carries out the reaction 2-formamido-N(1)-(5-O-phospho-beta-D-ribosyl)acetamidine + ATP = 5-amino-1-(5-phospho-beta-D-ribosyl)imidazole + ADP + phosphate + H(+). Its pathway is purine metabolism; IMP biosynthesis via de novo pathway; 5-amino-1-(5-phospho-D-ribosyl)imidazole from N(2)-formyl-N(1)-(5-phospho-D-ribosyl)glycinamide: step 2/2. The polypeptide is Phosphoribosylformylglycinamidine cyclo-ligase (Coxiella burnetii (strain RSA 331 / Henzerling II)).